Here is a 220-residue protein sequence, read N- to C-terminus: Octanoyltransferase (220 aa).

Residues 31 to 206 form the BPL/LPL catalytic domain; it reads DDTPDEVWLV…ELVTLLDYEQ (176 aa). Substrate is bound by residues 70–77, 137–139, and 150–152; these read RGGQVTYH, SLG, and GLA. The active-site Acyl-thioester intermediate is the cysteine 168.

It belongs to the LipB family.

It is found in the cytoplasm. It catalyses the reaction octanoyl-[ACP] + L-lysyl-[protein] = N(6)-octanoyl-L-lysyl-[protein] + holo-[ACP] + H(+). It participates in protein modification; protein lipoylation via endogenous pathway; protein N(6)-(lipoyl)lysine from octanoyl-[acyl-carrier-protein]: step 1/2. Catalyzes the transfer of endogenously produced octanoic acid from octanoyl-acyl-carrier-protein onto the lipoyl domains of lipoate-dependent enzymes. Lipoyl-ACP can also act as a substrate although octanoyl-ACP is likely to be the physiological substrate. This chain is Octanoyltransferase, found in Vibrio campbellii (strain ATCC BAA-1116).